We begin with the raw amino-acid sequence, 510 residues long: MDIRAAEISAILKDQIKNFGQEAEVTEVGQVLSVGDGIARVYGLDNVQAGEMVEFENGTRGMALNLETDNVGVVIFGADREIKEGQTVKRTRSIVDTPVGKGLLGRVVDALGNPIDGKGPIQATERKRVDVKAPGIIPRKSVNEPMATGLKAIDALIPVGRGQRELIIGDRQTGKTAIALDTILNQKPLNVEGAPEGQKLYCVYVAVGQKRSTVAQFVKVLEEQGALEYSIVVAATASDPAPMQYIAPFTGCTMGEYFRDNGMHAVIIYDDLSKQAVAYRQMSLLLRRPPGREAYPGDVFYLHSRLLERAAKLNDDHGAGSLTALPVIETQANDVSAYIPTNVISITDGQIFLETDLFFQGIRPAVNVGLSVSRVGSSAQTKAMKKVAGKIKGELAQYREMAAFAQFGSDLDASTQRLLNRGARLTELLKQPQFSPLKMEEQVVVIYAGVNGYLDALPVAKVRAFEDGLLSLLRGKEVGILDAIRTSRDLSDDTAAKLKAVVESYAKTFA.

169 to 176 (GDRQTGKT) contacts ATP.

The protein belongs to the ATPase alpha/beta chains family. F-type ATPases have 2 components, CF(1) - the catalytic core - and CF(0) - the membrane proton channel. CF(1) has five subunits: alpha(3), beta(3), gamma(1), delta(1), epsilon(1). CF(0) has four main subunits: a(1), b(1), b'(1) and c(9-12).

Its subcellular location is the cell inner membrane. It carries out the reaction ATP + H2O + 4 H(+)(in) = ADP + phosphate + 5 H(+)(out). Functionally, produces ATP from ADP in the presence of a proton gradient across the membrane. The alpha chain is a regulatory subunit. In Rhodopseudomonas palustris (strain HaA2), this protein is ATP synthase subunit alpha.